The chain runs to 88 residues: Large ribosomal subunit protein bL31B (88 aa).

The protein belongs to the bacterial ribosomal protein bL31 family. Type B subfamily. In terms of assembly, part of the 50S ribosomal subunit.

This Bordetella pertussis (strain Tohama I / ATCC BAA-589 / NCTC 13251) protein is Large ribosomal subunit protein bL31B.